The following is an 884-amino-acid chain: Lon protease homolog 2, peroxisomal (884 aa).

The region spanning L12 to L255 is the Lon N-terminal domain. The tract at residues S67–K101 is disordered. The span at S75–A89 shows a compositional bias: gly residues. G408–T415 provides a ligand contact to ATP. Residues V689 to G874 enclose the Lon proteolytic domain. Residues S780 and K823 contribute to the active site. The short motif at S882–L884 is the Microbody targeting signal element.

Belongs to the peptidase S16 family.

It is found in the peroxisome matrix. It carries out the reaction Hydrolysis of proteins in presence of ATP.. ATP-dependent serine protease that mediates the selective degradation of misfolded and unassembled polypeptides in the peroxisomal matrix. Necessary for type 2 peroxisome targeting signal (PTS2)-containing protein processing and facilitates peroxisome matrix protein import. The protein is Lon protease homolog 2, peroxisomal of Oryza sativa subsp. japonica (Rice).